A 374-amino-acid chain; its full sequence is uncharacterized protein (374 aa).

The stretch at 298–332 forms a coiled coil; that stretch reads TKEKLLKLHSEQKSLSEKINKLSGEKDIEQSMINN.

This is an uncharacterized protein from Acanthamoeba polyphaga (Amoeba).